Here is a 374-residue protein sequence, read N- to C-terminus: Queuine tRNA-ribosyltransferase (374 aa).

The active-site Proton acceptor is the Asp92. Residues 92-96, Asp146, Gln193, and Gly220 each bind substrate; that span reads DSGGY. The segment at 251–257 is RNA binding; that stretch reads GVGKPDD. Asp270 serves as the catalytic Nucleophile. An RNA binding; important for wobble base 34 recognition region spans residues 275-279; the sequence is TRSGR. Positions 308, 310, 313, and 339 each coordinate Zn(2+).

This sequence belongs to the queuine tRNA-ribosyltransferase family. In terms of assembly, homodimer. Within each dimer, one monomer is responsible for RNA recognition and catalysis, while the other monomer binds to the replacement base PreQ1. It depends on Zn(2+) as a cofactor.

The catalysed reaction is 7-aminomethyl-7-carbaguanine + guanosine(34) in tRNA = 7-aminomethyl-7-carbaguanosine(34) in tRNA + guanine. The protein operates within tRNA modification; tRNA-queuosine biosynthesis. In terms of biological role, catalyzes the base-exchange of a guanine (G) residue with the queuine precursor 7-aminomethyl-7-deazaguanine (PreQ1) at position 34 (anticodon wobble position) in tRNAs with GU(N) anticodons (tRNA-Asp, -Asn, -His and -Tyr). Catalysis occurs through a double-displacement mechanism. The nucleophile active site attacks the C1' of nucleotide 34 to detach the guanine base from the RNA, forming a covalent enzyme-RNA intermediate. The proton acceptor active site deprotonates the incoming PreQ1, allowing a nucleophilic attack on the C1' of the ribose to form the product. After dissociation, two additional enzymatic reactions on the tRNA convert PreQ1 to queuine (Q), resulting in the hypermodified nucleoside queuosine (7-(((4,5-cis-dihydroxy-2-cyclopenten-1-yl)amino)methyl)-7-deazaguanosine). This is Queuine tRNA-ribosyltransferase from Novosphingobium aromaticivorans (strain ATCC 700278 / DSM 12444 / CCUG 56034 / CIP 105152 / NBRC 16084 / F199).